The primary structure comprises 212 residues: MFQSKDLNVYFICGTQDIPEGRTIQEVLKEALEGGITLYQFREKGNGAKTGQDKVALAKELQALCKSYNVPFIVNDDVALAEEIDADGIHVGQDDEAVDDFNNRFEGKIIGLSIGNLEELNASDLTYVDYIGVGPIFATPSKDDASEPVGPKMIETLRKEVGDLPIVAIGGISLDNVQEVAKTSADGVSVISAIARSPHVTETVHKFLQYFK.

4-amino-2-methyl-5-(diphosphooxymethyl)pyrimidine contacts are provided by residues Q40–K44 and N75. Residues D76 and D95 each contribute to the Mg(2+) site. S113 is a 4-amino-2-methyl-5-(diphosphooxymethyl)pyrimidine binding site. 2-[(2R,5Z)-2-carboxy-4-methylthiazol-5(2H)-ylidene]ethyl phosphate is bound at residue T139–S141. K142 contributes to the 4-amino-2-methyl-5-(diphosphooxymethyl)pyrimidine binding site. Residues G171 and I191–S192 each bind 2-[(2R,5Z)-2-carboxy-4-methylthiazol-5(2H)-ylidene]ethyl phosphate.

Belongs to the thiamine-phosphate synthase family. Mg(2+) is required as a cofactor.

The catalysed reaction is 2-[(2R,5Z)-2-carboxy-4-methylthiazol-5(2H)-ylidene]ethyl phosphate + 4-amino-2-methyl-5-(diphosphooxymethyl)pyrimidine + 2 H(+) = thiamine phosphate + CO2 + diphosphate. The enzyme catalyses 2-(2-carboxy-4-methylthiazol-5-yl)ethyl phosphate + 4-amino-2-methyl-5-(diphosphooxymethyl)pyrimidine + 2 H(+) = thiamine phosphate + CO2 + diphosphate. It catalyses the reaction 4-methyl-5-(2-phosphooxyethyl)-thiazole + 4-amino-2-methyl-5-(diphosphooxymethyl)pyrimidine + H(+) = thiamine phosphate + diphosphate. It participates in cofactor biosynthesis; thiamine diphosphate biosynthesis; thiamine phosphate from 4-amino-2-methyl-5-diphosphomethylpyrimidine and 4-methyl-5-(2-phosphoethyl)-thiazole: step 1/1. Functionally, condenses 4-methyl-5-(beta-hydroxyethyl)thiazole monophosphate (THZ-P) and 2-methyl-4-amino-5-hydroxymethyl pyrimidine pyrophosphate (HMP-PP) to form thiamine monophosphate (TMP). This chain is Thiamine-phosphate synthase, found in Staphylococcus carnosus (strain TM300).